The sequence spans 155 residues: Putative pre-16S rRNA nuclease (155 aa).

It belongs to the YqgF nuclease family.

Its subcellular location is the cytoplasm. In terms of biological role, could be a nuclease involved in processing of the 5'-end of pre-16S rRNA. The polypeptide is Putative pre-16S rRNA nuclease (Paramagnetospirillum magneticum (strain ATCC 700264 / AMB-1) (Magnetospirillum magneticum)).